A 749-amino-acid chain; its full sequence is MAGSSFTLPSTGSAPLDMMLIDDSDLLQLGLQQVFSKRYTETPQSRYKLTRRASPDVSSGEGNVHALAFIYVNAETLQMIKNARSLTEANGVKDLVAIDVPPFRNDFSRALLLQVINLLGNNRNADDDLSHFIAVALPNSARSKILTTAPFEGSLSENFRGFPITREGNVACEVLAYGNNLMPKACSDSFPTVDLLYDYGKFFESCAADGRIGYFPEGVTKPKVAIIGAGFSGLVAASELLHAGVDDVTVYEASDRLGGKLWSHGFKSAPNVIAEMGAMRFPRSESCLFFYLKKHGLDSVGLFPNPGSVDTALFYRGRQYIWKAGEEPPELFRRVHHGWRAFLQDGYLHDGVMLASPLAIVDALNLGHLQQAHGFWQSWLTYFERESFSSGIEKMFLGNHPPGGEQWNSLDDLDLFKALGIGSGGFGPVFESGFIEILRLVVNGYEDNVRLSYEGISELPHRIASQVINGRSIRERTIHVQVEQIDREEDKINIKIKGGKVEVYDRVLVTSGFANIEMRHLLTSSNAFFHADVSHAIGNSHMTGASKLFLLTNEKFWLQHHLPSCILTTGVAKAVYCLDYDPRDPSGKGLVLISYTWEDDSHKLLAVPDKRERFASLQRDIGRAFPDFAKHLTPADGNYDDNIVQHDWLTDPHAGGAFKLNRRGNDVYSERLFFQPFDVMHPADDKGLYLAGCSCSFTGGWVHGAIQTACNATCAIIYGSGHLQELIHWRHLKEGNPLAHAWKRYRYQA.

4 residues coordinate FMN: Ser232, Glu252, Lys260, and Arg280. Arg280 provides a ligand contact to substrate.

This sequence belongs to the tryptophan 2-monooxygenase family. The cofactor is FMN.

The catalysed reaction is L-tryptophan + O2 = indole-3-acetamide + CO2 + H2O. Its pathway is plant hormone metabolism; auxin biosynthesis. In Rhizobium rhizogenes (Agrobacterium rhizogenes), this protein is Tryptophan 2-monooxygenase (aux1).